A 341-amino-acid polypeptide reads, in one-letter code: Glycerol-3-phosphate dehydrogenase [NAD(P)+] (341 aa).

The NADPH site is built by Ser14, Phe15, Arg35, and Lys108. Residues Lys108 and Gly136 each contribute to the sn-glycerol 3-phosphate site. NADPH is bound at residue Ser140. The sn-glycerol 3-phosphate site is built by Lys191, Asp244, Ser254, Arg255, and Asn256. Lys191 (proton acceptor) is an active-site residue. NADPH is bound at residue Arg255. The NADPH site is built by Val279 and Glu281.

Belongs to the NAD-dependent glycerol-3-phosphate dehydrogenase family.

It localises to the cytoplasm. The enzyme catalyses sn-glycerol 3-phosphate + NAD(+) = dihydroxyacetone phosphate + NADH + H(+). The catalysed reaction is sn-glycerol 3-phosphate + NADP(+) = dihydroxyacetone phosphate + NADPH + H(+). Its pathway is membrane lipid metabolism; glycerophospholipid metabolism. Catalyzes the reduction of the glycolytic intermediate dihydroxyacetone phosphate (DHAP) to sn-glycerol 3-phosphate (G3P), the key precursor for phospholipid synthesis. In Pseudomonas putida (strain GB-1), this protein is Glycerol-3-phosphate dehydrogenase [NAD(P)+].